Here is a 488-residue protein sequence, read N- to C-terminus: Cobyric acid synthase (488 aa).

The 188-residue stretch at 248-435 (VLKVVVPVLP…LHGLFESPAA (188 aa)) folds into the GATase cobBQ-type domain. C329 (nucleophile) is an active-site residue. H427 is an active-site residue.

The protein belongs to the CobB/CobQ family. CobQ subfamily.

Its pathway is cofactor biosynthesis; adenosylcobalamin biosynthesis. Its function is as follows. Catalyzes amidations at positions B, D, E, and G on adenosylcobyrinic A,C-diamide. NH(2) groups are provided by glutamine, and one molecule of ATP is hydrogenolyzed for each amidation. This chain is Cobyric acid synthase, found in Pseudomonas fluorescens (strain Pf0-1).